We begin with the raw amino-acid sequence, 54 residues long: Synaptosomal-associated protein 25 (54 aa).

Belongs to the SNAP-25 family. Part of the SNARE core complex containing SNAP25, VAMP2 and STX1A; this complex binds CPLX1. Found in a complex containing SYT1, SV2B and syntaxin-1. Found in a ternary complex with STX1A and VAMP8. Interacts with HSC70 and with SYT9, forming a complex with DNAJC5. The interaction with SYT9 is inhibited in presence of calcium. Isoform 1 and isoform 2 interact with BLOC1S6. Interacts with CENPF. Interacts with EQTN. Interacts with HGS. Interacts with KCNB1 (via N-terminus); reduces the voltage-dependent potassium channel KCNB1 activity in pancreatic beta cells. Interacts with OTOF. Interacts with RIMS1. Interacts with SNAPIN. Interacts with STXBP6. Interacts with TRIM9. Interacts with ZDHHC13 (via ANK repeats). Interacts with ZDHHC17 (via ANK repeats). Associates with the BLOC-1 complex. Interacts with PLCL1 (via C2 domain). Interacts with PRRT2; this interaction may impair the formation of the SNARE complex. Interacts with alpha-synuclein/SNCA. Interacts with PRPH2. Interacts with ROM1. Interacts with STX3. Post-translationally, the N-terminus is blocked.

It is found in the cytoplasm. The protein localises to the perinuclear region. The protein resides in the cell membrane. Its subcellular location is the synapse. It localises to the synaptosome. It is found in the photoreceptor inner segment. Its function is as follows. t-SNARE involved in the molecular regulation of neurotransmitter release. May play an important role in the synaptic function of specific neuronal systems. Associates with proteins involved in vesicle docking and membrane fusion. Regulates plasma membrane recycling through its interaction with CENPF. Modulates the gating characteristics of the delayed rectifier voltage-dependent potassium channel KCNB1 in pancreatic beta cells. This is Synaptosomal-associated protein 25 (SNAP25) from Oryctolagus cuniculus (Rabbit).